A 327-amino-acid polypeptide reads, in one-letter code: Phenylalanine--tRNA ligase alpha subunit (327 aa).

Glutamate 252 contributes to the Mg(2+) binding site.

It belongs to the class-II aminoacyl-tRNA synthetase family. Phe-tRNA synthetase alpha subunit type 1 subfamily. As to quaternary structure, tetramer of two alpha and two beta subunits. Mg(2+) is required as a cofactor.

The protein resides in the cytoplasm. It carries out the reaction tRNA(Phe) + L-phenylalanine + ATP = L-phenylalanyl-tRNA(Phe) + AMP + diphosphate + H(+). This is Phenylalanine--tRNA ligase alpha subunit from Shigella sonnei (strain Ss046).